The following is a 186-amino-acid chain: Protein GrpE (186 aa).

Positions 1–13 (MSENTQPEQNQPL) are enriched in polar residues. Residues 1–22 (MSENTQPEQNQPLTGAPSPEEL) form a disordered region.

It belongs to the GrpE family. As to quaternary structure, homodimer.

Its subcellular location is the cytoplasm. Participates actively in the response to hyperosmotic and heat shock by preventing the aggregation of stress-denatured proteins, in association with DnaK and GrpE. It is the nucleotide exchange factor for DnaK and may function as a thermosensor. Unfolded proteins bind initially to DnaJ; upon interaction with the DnaJ-bound protein, DnaK hydrolyzes its bound ATP, resulting in the formation of a stable complex. GrpE releases ADP from DnaK; ATP binding to DnaK triggers the release of the substrate protein, thus completing the reaction cycle. Several rounds of ATP-dependent interactions between DnaJ, DnaK and GrpE are required for fully efficient folding. This Polaromonas sp. (strain JS666 / ATCC BAA-500) protein is Protein GrpE.